A 469-amino-acid polypeptide reads, in one-letter code: MAEFPFEISPMFEGERVRKEGMFVELGGPKSLGLELVRAADMDAIEDDKVTIVGPDLKDMEEGKTYPWAMIFNIGGELVEPDLESVVERRVHDFINYCQGIMHLNQRYDVWMRVSKDTAGKMDSFEPFGKAVMMLFKTELPFIEKMQVTFYTGKEEVEKQMELAKEIFKARDARTKDLHDEDVDVFYGCTLCQSFAPTNVCVVSPDRISLCGAINWFDGRAAAKVDPEGPQFEIAKGDLLDAVTGEYTGVNEIAKKLSSGEFDKIKLHSFFDSPHTSCGCFEVVGFYIPEVDGIGWVDREYQGMAPNGIGFSTMAGQTGGGKQIVGFLGIGVNYFYSPKFIQADGGWNRVVWLPSGLKAKIDEAIPADLKDKIATENDATDIASLKDFLEAKNHPVVATWAAAEEEEEEEEEEEEVAVAAAPMMMPAAGFQMPAMPMMSGGSGGGIKLTFKNAKITIDKLVISEKKEKK.

Residues Cys-189, Cys-192, Cys-278, and Cys-280 each coordinate [Ni-Fe-S] cluster.

It belongs to the CdhC family. In terms of assembly, monomer. The ACDS complex is made up of alpha, epsilon, beta, gamma and delta chains with a probable stoichiometry of (alpha(2)epsilon(2))(4)-beta(8)-(gamma(1)delta(1))(8) (Potential). It depends on [Ni-Fe-S] cluster as a cofactor.

The catalysed reaction is Co(I)-[corrinoid Fe-S protein] + acetyl-CoA + H(+) = methyl-Co(III)-[corrinoid Fe-S protein] + CO + CoA. Its pathway is one-carbon metabolism; methanogenesis from acetate. Its function is as follows. Part of a complex that catalyzes the reversible cleavage of acetyl-CoA, allowing growth on acetate as sole source of carbon and energy. The alpha-epsilon complex generates CO from CO(2), while the beta subunit (this protein) combines the CO with CoA and a methyl group to form acetyl-CoA. The methyl group, which is incorporated into acetyl-CoA, is transferred to the beta subunit by a corrinoid iron-sulfur protein (the gamma-delta complex). The polypeptide is Acetyl-CoA decarbonylase/synthase complex subunit beta 1 (cdhC1) (Methanosarcina thermophila).